The following is a 456-amino-acid chain: Chromosomal replication initiator protein DnaA (456 aa).

The segment at methionine 1 to leucine 79 is domain I, interacts with DnaA modulators. The domain II stretch occupies residues leucine 79–lysine 112. The disordered stretch occupies residues proline 89–lysine 112. The segment covering serine 90–alanine 108 has biased composition (pro residues). The domain III, AAA+ region stretch occupies residues threonine 113–serine 329. ATP contacts are provided by glycine 157, glycine 159, lysine 160, and threonine 161. The tract at residues serine 330–alanine 456 is domain IV, binds dsDNA.

Belongs to the DnaA family. Oligomerizes as a right-handed, spiral filament on DNA at oriC.

The protein resides in the cytoplasm. Functionally, plays an essential role in the initiation and regulation of chromosomal replication. ATP-DnaA binds to the origin of replication (oriC) to initiate formation of the DNA replication initiation complex once per cell cycle. Binds the DnaA box (a 9 base pair repeat at the origin) and separates the double-stranded (ds)DNA. Forms a right-handed helical filament on oriC DNA; dsDNA binds to the exterior of the filament while single-stranded (ss)DNA is stabiized in the filament's interior. The ATP-DnaA-oriC complex binds and stabilizes one strand of the AT-rich DNA unwinding element (DUE), permitting loading of DNA polymerase. After initiation quickly degrades to an ADP-DnaA complex that is not apt for DNA replication. Binds acidic phospholipids. The protein is Chromosomal replication initiator protein DnaA of Deinococcus deserti (strain DSM 17065 / CIP 109153 / LMG 22923 / VCD115).